Here is a 561-residue protein sequence, read N- to C-terminus: MCGIWALFGSDDCLSVQCLSAMKIAHRGPDAFRFENVNGYTNCCFGFHRLAVVDQLFGMQPIRVKKYPYLWLCYNGEIYNHKKLQHHFEFEYQTKVDGEIILHLYDKGGIEQTVCMLDGVFAFILLDTANKKVFLGRDTYGVRPLFKAMTEDGFLAVCSEAKGLVNLKHSMTPFLKVEPFLPGHYEVLDLKPNGKVASVEMVKHHHCRDEPLHALYDGVEKLFPGFEIETVKSNLRILFDNAVKKRLMTDRRIGCLLSGGLDSSLVAATLLKQLKEAQVQYPLQTFAIGMEDSPDLLAARKVANHIGSEHHEVLFNSEEGIQVLDEVIFSLETYDITTVRASVGMYLISKYIRKNTDSVVIFSGEGSDELTQGYIYFHKAPSPEKAEEESERLLRELYLFDVLRADRTTAAHGLELRVPFLDHRFSSYYLSLPPDMRVPKNGIEKHLLRETFEDSNLIPKEILWRPKEAFSDGITSVKNSWFRILQDYIEHQVDDAAMASAAQKFPINTPKTKEGYYYRQIFENHYPGRADWLPHYWMPRWTNATDPSARTLTHYKAAAKA.

Cysteine 2 serves as the catalytic For GATase activity. The 190-residue stretch at 2–191 folds into the Glutamine amidotransferase type-2 domain; sequence CGIWALFGSD…PGHYEVLDLK (190 aa). Residues 49–53, 75–77, and aspartate 97 each bind L-glutamine; these read RLAVV and NGE. In terms of domain architecture, Asparagine synthetase spans 213-536; it reads HALYDGVEKL…PGRADWLPHY (324 aa). ATP-binding positions include leucine 256, isoleucine 288, and 363-364; that span reads SG. Residue lysine 385 is modified to N6-acetyllysine. Threonine 545 bears the Phosphothreonine mark.

It carries out the reaction L-aspartate + L-glutamine + ATP + H2O = L-asparagine + L-glutamate + AMP + diphosphate + H(+). It functions in the pathway amino-acid biosynthesis; L-asparagine biosynthesis; L-asparagine from L-aspartate (L-Gln route): step 1/1. The polypeptide is Asparagine synthetase [glutamine-hydrolyzing] (ASNS) (Bos taurus (Bovine)).